The sequence spans 278 residues: 3-methyl-2-oxobutanoate hydroxymethyltransferase (278 aa).

Residues Asp-43 and Asp-82 each coordinate Mg(2+). 3-methyl-2-oxobutanoate-binding positions include 43–44, Asp-82, and Lys-112; that span reads DS. Mg(2+) is bound at residue Glu-114. Glu-181 functions as the Proton acceptor in the catalytic mechanism.

It belongs to the PanB family. As to quaternary structure, homodecamer; pentamer of dimers. The cofactor is Mg(2+).

Its subcellular location is the cytoplasm. The catalysed reaction is 3-methyl-2-oxobutanoate + (6R)-5,10-methylene-5,6,7,8-tetrahydrofolate + H2O = 2-dehydropantoate + (6S)-5,6,7,8-tetrahydrofolate. It participates in cofactor biosynthesis; (R)-pantothenate biosynthesis; (R)-pantoate from 3-methyl-2-oxobutanoate: step 1/2. In terms of biological role, catalyzes the reversible reaction in which hydroxymethyl group from 5,10-methylenetetrahydrofolate is transferred onto alpha-ketoisovalerate to form ketopantoate. In Bacillus cereus (strain B4264), this protein is 3-methyl-2-oxobutanoate hydroxymethyltransferase.